The primary structure comprises 253 residues: MPLLSSIVGLTGLLLWMGHTVGALRMPNTTLVQGRPKNTAVWPLSGLGVPRHRRKRHISARDMSALLDYHNHIRASVHPPAANMEYMVWDEQLARSAEAWATQCIWTHGPSQLMKYVGQNLSIHSGRFRSVVDLVRSWSEEKRHYSFPAPKDCTPHCPWLCSGPVCSHYTQMVWASSSRLGCAINTCSSINVWGNTWQQAVYLVCNYAIKGNWIGEAPYKAGKPCSACPPSYQGNCNSNMCFSGLKSNRLPWV.

Residues 1–23 (MPLLSSIVGLTGLLLWMGHTVGA) form the signal peptide. A propeptide spanning residues 24-56 (LRMPNTTLVQGRPKNTAVWPLSGLGVPRHRRKR) is cleaved from the precursor. N-linked (GlcNAc...) asparagine glycans are attached at residues Asn28 and Asn120. The region spanning 67–207 (LDYHNHIRAS…QQAVYLVCNY (141 aa)) is the SCP domain.

It belongs to the CRISP family.

It localises to the secreted. Its function is as follows. Putative serine protease inhibitor. The sequence is that of Peptidase inhibitor R3HDML (R3hdml) from Mus musculus (Mouse).